Reading from the N-terminus, the 232-residue chain is Large ribosomal subunit protein uL1 (232 aa).

It belongs to the universal ribosomal protein uL1 family. As to quaternary structure, part of the 50S ribosomal subunit.

Functionally, binds directly to 23S rRNA. The L1 stalk is quite mobile in the ribosome, and is involved in E site tRNA release. Its function is as follows. Protein L1 is also a translational repressor protein, it controls the translation of the L11 operon by binding to its mRNA. The sequence is that of Large ribosomal subunit protein uL1 from Xanthobacter autotrophicus (strain ATCC BAA-1158 / Py2).